Here is a 362-residue protein sequence, read N- to C-terminus: tRNA N6-adenosine threonylcarbamoyltransferase (362 aa).

Fe cation-binding residues include His116 and His120. Residues 138–142 (LVSGG), Asp171, Gly184, and Asn284 contribute to the substrate site. A Fe cation-binding site is contributed by Asp312.

It belongs to the KAE1 / TsaD family. Requires Fe(2+) as cofactor.

The protein resides in the cytoplasm. The enzyme catalyses L-threonylcarbamoyladenylate + adenosine(37) in tRNA = N(6)-L-threonylcarbamoyladenosine(37) in tRNA + AMP + H(+). Functionally, required for the formation of a threonylcarbamoyl group on adenosine at position 37 (t(6)A37) in tRNAs that read codons beginning with adenine. Is involved in the transfer of the threonylcarbamoyl moiety of threonylcarbamoyl-AMP (TC-AMP) to the N6 group of A37, together with TsaE and TsaB. TsaD likely plays a direct catalytic role in this reaction. The polypeptide is tRNA N6-adenosine threonylcarbamoyltransferase (Chelativorans sp. (strain BNC1)).